The chain runs to 56 residues: Large ribosomal subunit protein bL32 (56 aa).

Belongs to the bacterial ribosomal protein bL32 family.

This chain is Large ribosomal subunit protein bL32, found in Bacillus cereus (strain ATCC 14579 / DSM 31 / CCUG 7414 / JCM 2152 / NBRC 15305 / NCIMB 9373 / NCTC 2599 / NRRL B-3711).